Here is a 306-residue protein sequence, read N- to C-terminus: Homeobox protein HMX3 (306 aa).

The interval 95 to 181 (HTPRTEVPDK…DKKPCRKKKT (87 aa)) is disordered. Composition is skewed to basic and acidic residues over residues 117–143 (GERD…KSPE) and 153–174 (EEGK…PDKK). Residues 178 to 237 (KKKTRTVFSRSQVFQLESTFDMKRYLSSSERAGLAASLHLTETQVKIWFQNRRNKWKRQL) constitute a DNA-binding region (homeobox).

Belongs to the HMX homeobox family.

It is found in the nucleus. In terms of biological role, transcription factor involved in specification of neuronal cell types and which is required for inner ear and hypothalamus development. Binds to the 5'-CAAGTG-3' core sequence. May act as a stage-specific inhibitor of anf1 in the anterior neural plate during the development. The chain is Homeobox protein HMX3 (hmx3) from Xenopus tropicalis (Western clawed frog).